Consider the following 314-residue polypeptide: Carbamate kinase (314 aa).

Belongs to the carbamate kinase family. In terms of assembly, homodimer.

It localises to the cytoplasm. The catalysed reaction is hydrogencarbonate + NH4(+) + ATP = carbamoyl phosphate + ADP + H2O + H(+). Its function is as follows. Carbamate kinase that plays a biosynthetic role in that it produces carbamoyl-phosphate. This is Carbamate kinase (cpkA) from Pyrococcus furiosus (strain ATCC 43587 / DSM 3638 / JCM 8422 / Vc1).